A 118-amino-acid polypeptide reads, in one-letter code: Ig heavy chain V region AC38 205.12 (118 aa).

Positions 1–98 (EVQLQQSGPE…EDSAVYYCAR (98 aa)) are v segment. A disulfide bridge connects residues cysteine 22 and cysteine 96. The tract at residues 99–104 (GYGYDP) is d segment. A j segment region spans residues 105-118 (FDVWGTGTTVTVSS).

This chain is Ig heavy chain V region AC38 205.12, found in Mus musculus (Mouse).